We begin with the raw amino-acid sequence, 137 residues long: Transcription antitermination protein NusB (137 aa).

It belongs to the NusB family.

Involved in transcription antitermination. Required for transcription of ribosomal RNA (rRNA) genes. Binds specifically to the boxA antiterminator sequence of the ribosomal RNA (rrn) operons. In Haemophilus ducreyi (strain 35000HP / ATCC 700724), this protein is Transcription antitermination protein NusB.